The sequence spans 495 residues: ATP synthase subunit beta, chloroplastic (495 aa).

172 to 179 (GGAGVGKT) is a binding site for ATP.

This sequence belongs to the ATPase alpha/beta chains family. F-type ATPases have 2 components, CF(1) - the catalytic core - and CF(0) - the membrane proton channel. CF(1) has five subunits: alpha(3), beta(3), gamma(1), delta(1), epsilon(1). CF(0) has four main subunits: a(1), b(1), b'(1) and c(9-12).

It localises to the plastid. The protein localises to the chloroplast thylakoid membrane. It carries out the reaction ATP + H2O + 4 H(+)(in) = ADP + phosphate + 5 H(+)(out). Functionally, produces ATP from ADP in the presence of a proton gradient across the membrane. The catalytic sites are hosted primarily by the beta subunits. The chain is ATP synthase subunit beta, chloroplastic from Scilla messeniaca (Greek squill).